The following is a 266-amino-acid chain: Glutamate racemase (266 aa).

Substrate is bound by residues 9–10 (DS) and 41–42 (YG). C73 (proton donor/acceptor) is an active-site residue. 74–75 (NS) is a binding site for substrate. The active-site Proton donor/acceptor is C183. 184 to 185 (TH) contacts substrate.

It belongs to the aspartate/glutamate racemases family.

It carries out the reaction L-glutamate = D-glutamate. It participates in cell wall biogenesis; peptidoglycan biosynthesis. Provides the (R)-glutamate required for cell wall biosynthesis. The chain is Glutamate racemase from Shewanella loihica (strain ATCC BAA-1088 / PV-4).